Consider the following 827-residue polypeptide: WD repeat-containing protein 27 (827 aa).

WD repeat units lie at residues 3–57 (NPQD…IWNT), 62–101 (HQLLILRGHHQPITAMAFGNKVNPLLICSASLDYVIMWNL), 112–151 (LVPRGTVMGSLLGKVLCLQLSLDDHVVAVCAGNKIFMLDI), 155–194 (AVRAELQGHLGPVTAVEFCPWRAGTLISASEDRGFKVWDH), 201–237 (YSSSVLSAYPLLSLFIDAESRQLVTGCADGQLWIFSL), 292–337 (FPVL…LANL), 344–387 (YYKD…VLEI), 502–542 (KPGP…VFDA), 546–584 (GTPAVFSGHDGAVNAVCWSQDRRWLLSAARDGTLRMWSA), 590–629 (ALLLGKDMFSKPIQSAQFYYIDAFILLSSGPEFQLLRYHI), 646–687 (KLIC…VFDL), 698–740 (EAHS…LWDL), 746–784 (ERHFEGHPTRGYPCGIAFSPCGRFAACGAEDRHAYVYEM), and 788–826 (TFSHRLAGHTDTVTGVAFNPSAPQLATATLDGKLQLFLA).

The protein is WD repeat-containing protein 27 (WDR27) of Homo sapiens (Human).